A 233-amino-acid polypeptide reads, in one-letter code: Biosynthetic peptidoglycan transglycosylase (233 aa).

The chain crosses the membrane as a helical span at residues 8–28 (LIALPVGIFIFFNAYVYGNII).

This sequence belongs to the glycosyltransferase 51 family.

The protein resides in the cell inner membrane. It carries out the reaction [GlcNAc-(1-&gt;4)-Mur2Ac(oyl-L-Ala-gamma-D-Glu-L-Lys-D-Ala-D-Ala)](n)-di-trans,octa-cis-undecaprenyl diphosphate + beta-D-GlcNAc-(1-&gt;4)-Mur2Ac(oyl-L-Ala-gamma-D-Glu-L-Lys-D-Ala-D-Ala)-di-trans,octa-cis-undecaprenyl diphosphate = [GlcNAc-(1-&gt;4)-Mur2Ac(oyl-L-Ala-gamma-D-Glu-L-Lys-D-Ala-D-Ala)](n+1)-di-trans,octa-cis-undecaprenyl diphosphate + di-trans,octa-cis-undecaprenyl diphosphate + H(+). It participates in cell wall biogenesis; peptidoglycan biosynthesis. Functionally, peptidoglycan polymerase that catalyzes glycan chain elongation from lipid-linked precursors. The protein is Biosynthetic peptidoglycan transglycosylase of Neisseria meningitidis serogroup C / serotype 2a (strain ATCC 700532 / DSM 15464 / FAM18).